We begin with the raw amino-acid sequence, 268 residues long: Ethylene-responsive transcription factor ERN1 (268 aa).

Residues 1–21 (MEIQFQQPNMQNQKAGISVTN) show a composition bias toward polar residues. The segment at 1–36 (MEIQFQQPNMQNQKAGISVTNKGGKFKGRNRNSNNT) is disordered. The segment at residues 38-95 (KFVGVRQRPSGRWVAEIKDTTQKIRMWLGTFETAEEAARAYDEAACLLRGSNTRTNFI) is a DNA-binding region (AP2/ERF). Positions 114-154 (NRKGDKKQEDGAVASAPSNSKTTISNTSTITSNDDNKESTL) are disordered. Residues 131-146 (SNSKTTISNTSTITSN) show a composition bias toward low complexity.

The protein belongs to the AP2/ERF transcription factor family. ERF subfamily. As to expression, expressed in roots, root hairs and leaves. Expressed in root epidermis and root hairs.

The protein resides in the nucleus. Its function is as follows. Transcription factor involved in symbiotic nodule signaling in response to rhizobial Nod factors (NFs). Binds to the GCC-box (NF-responsive box) of ENOD11 promoter. Acts as a transcriptional activator of NF-responsive box-containing target gene promoters in root hairs. Functions as a transcriptional regulator required for root infection by symbiotic rhizobia, infection thread (IT) formation and maintenance, and nodule development. Necessary for NF-induced gene expression and spontaneous nodulation activated by CCAMK. Functions downstream of CCAMK to activate nodulation gene expression. Involved in early stages of root nodule development. Functions redundantly with ERN2. Is essential with ERN2 for the initiation of root hair infection, and nodule organogenesis and development. Required for accurate expression of the NF signaling genes ENOD11 and ENOD12. The chain is Ethylene-responsive transcription factor ERN1 from Medicago truncatula (Barrel medic).